Consider the following 134-residue polypeptide: Retinol-binding protein 2 (134 aa).

All-trans-retinol is bound by residues Lys-41 and Gln-109.

The protein belongs to the calycin superfamily. Fatty-acid binding protein (FABP) family. Expressed in prenatal liver, intestine and lung, and in adult intestine.

The protein localises to the cytoplasm. Functionally, intracellular transport of retinol. This chain is Retinol-binding protein 2 (Rbp2), found in Mus musculus (Mouse).